The chain runs to 442 residues: Putative zinc metalloprotease PM1991 (442 aa).

H21 lines the Zn(2+) pocket. Residue E22 is part of the active site. H25 serves as a coordination point for Zn(2+). The helical transmembrane segment at A97–Y119 threads the bilayer. The PDZ domain occupies D198–L286. 2 helical membrane passes run I366–F388 and L418–L440.

The protein belongs to the peptidase M50B family. Zn(2+) is required as a cofactor.

The protein localises to the cell inner membrane. In Pasteurella multocida (strain Pm70), this protein is Putative zinc metalloprotease PM1991.